We begin with the raw amino-acid sequence, 396 residues long: MNDTSFENCIKCTVCTTACPVSRVNPGYPGPKQAGPDGERLRLKDGALYDEALKYCINCKRCEVACPSDVKIGDIIQRARAKYDTTRPSLRNFVLSHTDLMGSVSTPFAPIVNTATSLKPVRQLLDAALKIDHRRTLPKYSFGTFRRWYRSVAAQQAQYKDQVAFFHGCFVNYNHPQLGKDLIKVLNAMGTGVQLLSKEKCCGVPLIANGFTDKARKQAITNVESIREAVGVKGIPVIATSSTCTFALRDEYPEVLNVDNKGLRDHIELATRWLWRKLDEGKTLPLKPLPLKVVYHTPCHMEKMGWTLYTLELLRNIPGLELTVLDSQCCGIAGTYGFKKENYPTSQAIGAPLFRQIEESGADLVVTDCETCKWQIEMSTSLRCEHPITLLAQALA.

4Fe-4S ferredoxin-type domains follow at residues 2–29 (NDTS…PGYP) and 45–76 (DGAL…GDII). Residues C9, C12, C15, C19, C56, C59, C62, and C66 each contribute to the [4Fe-4S] cluster site.

As to quaternary structure, composed of a catalytic GlpA/B dimer and of GlpC.

The protein resides in the cell inner membrane. The protein operates within polyol metabolism; glycerol degradation via glycerol kinase pathway; glycerone phosphate from sn-glycerol 3-phosphate (anaerobic route): step 1/1. Functionally, electron transfer protein; may also function as the membrane anchor for the GlpAB dimer. In Escherichia coli O157:H7, this protein is Anaerobic glycerol-3-phosphate dehydrogenase subunit C (glpC).